Reading from the N-terminus, the 140-residue chain is Profilin-1 (140 aa).

Ala2 is modified (N-acetylalanine). Phosphoserine is present on Ser28. Lys54 participates in a covalent cross-link: Glycyl lysine isopeptide (Lys-Gly) (interchain with G-Cter in SUMO2); alternate. Lys54 participates in a covalent cross-link: Glycyl lysine isopeptide (Lys-Gly) (interchain with G-Cter in ubiquitin); alternate. The residue at position 57 (Ser57) is a Phosphoserine. Position 108 is an N6-acetyllysine (Lys108). At Tyr129 the chain carries Phosphotyrosine. The residue at position 138 (Ser138) is a Phosphoserine; by ROCK1.

This sequence belongs to the profilin family. In terms of assembly, found in a complex with XPO6, Ran, ACTB and PFN1. Interacts with ACTB. Interacts with VASP. Interacts with HTT. Interacts with SH3BGRL. Occurs in many kinds of cells as a complex with monomeric actin in a 1:1 ratio. Interacts with ACTMAP. In terms of processing, phosphorylation at Ser-138 reduces its affinity for G-actin and blocks its interaction with HTT, reducing its ability to inhibit androgen receptor (AR) and HTT aggregation.

The protein resides in the cytoplasm. Its subcellular location is the cytoskeleton. Functionally, binds to actin and affects the structure of the cytoskeleton. At high concentrations, profilin prevents the polymerization of actin, whereas it enhances it at low concentrations. By binding to PIP2, it inhibits the formation of IP3 and DG. Inhibits androgen receptor (AR) and HTT aggregation and binding of G-actin is essential for its inhibition of AR. The polypeptide is Profilin-1 (PFN1) (Bos taurus (Bovine)).